The primary structure comprises 700 residues: Tectonic-2 (700 aa).

A signal peptide spans 1 to 25 (MGSLSPLSLLWGLLLLQGVLRPLRG). At 26 to 665 (DPVFIPPFIR…YYQGEPQSQC (640 aa)) the chain is on the extracellular side. Asparagine 76, asparagine 82, asparagine 146, asparagine 156, and asparagine 389 each carry an N-linked (GlcNAc...) asparagine glycan. A helical membrane pass occupies residues 666–682 (VAKGLMLLSLLMLAILL). The Cytoplasmic segment spans residues 683–700 (RHPWVRMCKARDSAAIYH).

Belongs to the tectonic family. As to quaternary structure, part of the tectonic-like complex (also named B9 complex). As to expression, significant expression is observed in brain, kidney and eye.

The protein localises to the membrane. The protein resides in the cytoplasm. It localises to the cytoskeleton. Its subcellular location is the cilium basal body. Component of the tectonic-like complex, a complex localized at the transition zone of primary cilia and acting as a barrier that prevents diffusion of transmembrane proteins between the cilia and plasma membranes. Required for hedgehog signaling transduction. The sequence is that of Tectonic-2 (Tctn2) from Mus musculus (Mouse).